Consider the following 48-residue polypeptide: Delta-ctenitoxin-Pn1b (48 aa).

Intrachain disulfides connect C1/C15, C8/C21, C12/C48, C14/C31, and C23/C29.

Belongs to the neurotoxin 03 (Tx2) family. 05 subfamily. As to expression, expressed by the venom gland.

It localises to the secreted. Functionally, insecticidal neurotoxin that reversibly inhibits the N-methyl-D-aspartate (NMDA)-subtype of ionotropic glutamate receptor (GRIN) and inhibits inactivation of insect sodium channels (Nav). Inhibits glutamate uptake in rat brain synaptosomes. In vivo, induces immediate excitatory effects when injected intrathoracically in houseflies and cockroaches. The chain is Delta-ctenitoxin-Pn1b from Phoneutria nigriventer (Brazilian armed spider).